The sequence spans 310 residues: Proline-rich 28 kDa antigen (310 aa).

Positions 1–32 (MIQIARTWRVFAGGMATGFIGVVLVTAGKASA) are cleaved as a signal peptide. The tract at residues 278 to 310 (QAPAPAPGSAPVGLPGQAPGYPPAGTLTPVPPR) is disordered.

It to M.leprae ML0031.

The chain is Proline-rich 28 kDa antigen (mtc28) from Mycobacterium bovis (strain ATCC BAA-935 / AF2122/97).